A 384-amino-acid polypeptide reads, in one-letter code: MKIRILVLILCALTQGCTYVDDYMLGKDNTPQPKELKEIQPKVKMAQSWTTPVGKAHKTNEYLNIKPAIRGDVIYTADASGLVQAVNRKDGQIKWSTALKNNIVSGPTVAAGYVAVGTNASTLVLLNQSDGKEIWQNKVSAEVLAPPAISHQKVIAKTIDGKVYAIDAVNGKQLWVADHGAPSLVLKASSSPIIVDDLVLVGFSDGKLDALELQTGRLIWQRSIAYGTGASDVERLVDIDSDPIISNNVAYLATYQGYVGALSLSNGQFIWRKPASVYKNMLLSHNNLYFTDSNDVLWSLNSSTGQVNWKQTSLKARGLTAPALVGGNLAVGDKTGYLHILSTQTGELLGRSQLSGGVTVSPSVSGKNMYVLTNNGMLNQLSVS.

The signal sequence occupies residues 1-16 (MKIRILVLILCALTQG). C17 is lipidated: N-palmitoyl cysteine. The S-diacylglycerol cysteine moiety is linked to residue C17.

Belongs to the BamB family. In terms of assembly, part of the Bam complex.

The protein localises to the cell outer membrane. In terms of biological role, part of the outer membrane protein assembly complex, which is involved in assembly and insertion of beta-barrel proteins into the outer membrane. This chain is Outer membrane protein assembly factor BamB, found in Legionella pneumophila (strain Paris).